A 603-amino-acid chain; its full sequence is uncharacterized protein (603 aa).

The PE domain occupies Met1–Ala93. Residues Gly309 to Glu333 are disordered.

This sequence belongs to the mycobacterial PE family. PGRS subfamily.

This is an uncharacterized protein from Mycobacterium tuberculosis (strain CDC 1551 / Oshkosh).